A 245-amino-acid polypeptide reads, in one-letter code: tRNA pseudouridine synthase A (245 aa).

Asp52 (nucleophile) is an active-site residue. Tyr111 contributes to the substrate binding site.

Belongs to the tRNA pseudouridine synthase TruA family. In terms of assembly, homodimer.

The enzyme catalyses uridine(38/39/40) in tRNA = pseudouridine(38/39/40) in tRNA. Formation of pseudouridine at positions 38, 39 and 40 in the anticodon stem and loop of transfer RNAs. The sequence is that of tRNA pseudouridine synthase A from Rhodospirillum centenum (strain ATCC 51521 / SW).